A 574-amino-acid polypeptide reads, in one-letter code: Glutamyl-tRNA(Gln) amidotransferase subunit B, mitochondrial (574 aa).

This sequence belongs to the GatB/GatE family. GatB subfamily. As to quaternary structure, subunit of the heterotrimeric GatCAB amidotransferase (AdT) complex, composed of A, B and C subunits.

Its subcellular location is the mitochondrion. The enzyme catalyses L-glutamyl-tRNA(Gln) + L-glutamine + ATP + H2O = L-glutaminyl-tRNA(Gln) + L-glutamate + ADP + phosphate + H(+). Allows the formation of correctly charged Gln-tRNA(Gln) through the transamidation of misacylated Glu-tRNA(Gln) in the mitochondria. The reaction takes place in the presence of glutamine and ATP through an activated gamma-phospho-Glu-tRNA(Gln). The polypeptide is Glutamyl-tRNA(Gln) amidotransferase subunit B, mitochondrial (Phytophthora infestans (strain T30-4) (Potato late blight agent)).